Consider the following 312-residue polypeptide: Pollen allergen Phl p 5.0101 (312 aa).

A signal peptide spans 1-25; that stretch reads MAVHQYTVALFLAVALVAGPAASYA.

Belongs to the Poa p IX/Phl p VI allergen family.

It localises to the secreted. The chain is Pollen allergen Phl p 5.0101 from Phleum pratense (Common timothy).